Reading from the N-terminus, the 103-residue chain is Putative RNA-binding protein RbpB (103 aa).

Residues 2–79 (SIYVGNLSYD…RDLKVNKAKP (78 aa)) enclose the RRM domain. A compositionally biased stretch (basic and acidic residues) spans 74–85 (VNKAKPREDRGG). Residues 74–103 (VNKAKPREDRGGSRGSFGGNRSNNNFRNRY) form a disordered region. A compositionally biased stretch (low complexity) spans 92 to 103 (GNRSNNNFRNRY).

The chain is Putative RNA-binding protein RbpB (rbpB) from Nostoc sp. (strain PCC 7120 / SAG 25.82 / UTEX 2576).